The following is a 638-amino-acid chain: Acetolactate synthase 2, chloroplastic (638 aa).

A chloroplast-targeting transit peptide spans 1–39 (MATAATAAAALTGATTATPKSRRRAHHLATRRALAAPIR). The disordered stretch occupies residues 44 to 67 (SRATPTAPPATPLRPWGPNEPRKG). Glutamate 112 serves as a coordination point for thiamine diphosphate. Cysteines 132 and 278 form a disulfide. FAD contacts are provided by residues arginine 214, 320–341 (HGTVYANYAVDKADLLLAFGVR), and 363–382 (DIDPAEIGKNKQPHVSICAD). The interval 455–535 (QHQMWAAQYY…VKVFVLNNQH (81 aa)) is thiamine pyrophosphate binding. Mg(2+) is bound by residues aspartate 506 and asparagine 533.

It belongs to the TPP enzyme family. Requires Mg(2+) as cofactor. Thiamine diphosphate serves as cofactor.

It is found in the plastid. The protein resides in the chloroplast. The catalysed reaction is 2 pyruvate + H(+) = (2S)-2-acetolactate + CO2. It functions in the pathway amino-acid biosynthesis; L-isoleucine biosynthesis; L-isoleucine from 2-oxobutanoate: step 1/4. The protein operates within amino-acid biosynthesis; L-valine biosynthesis; L-valine from pyruvate: step 1/4. The protein is Acetolactate synthase 2, chloroplastic (ALS2) of Zea mays (Maize).